We begin with the raw amino-acid sequence, 206 residues long: MSETNGPFRIGIGGPVGSGKTALTDRLCKAMRERWNIAAITNDIYTKEDAEFLTRSAALAPERIMGVETGGCPHTAIREDASINLAAVDAMNARFPGLDLVFIESGGDNLAATFSPELADLTIYVIDVSAGDKIPRKGGPGITRSDLLVINKIDLAPLVEASLEVMDRDSRKMRGEKPFLFTNLKTNLGVAEIVAFIERQGGLSGV.

14-21 contacts GTP; that stretch reads GPVGSGKT.

Belongs to the SIMIBI class G3E GTPase family. UreG subfamily. Homodimer. UreD, UreF and UreG form a complex that acts as a GTP-hydrolysis-dependent molecular chaperone, activating the urease apoprotein by helping to assemble the nickel containing metallocenter of UreC. The UreE protein probably delivers the nickel.

It is found in the cytoplasm. Its function is as follows. Facilitates the functional incorporation of the urease nickel metallocenter. This process requires GTP hydrolysis, probably effectuated by UreG. This chain is Urease accessory protein UreG, found in Methylocella silvestris (strain DSM 15510 / CIP 108128 / LMG 27833 / NCIMB 13906 / BL2).